Here is a 450-residue protein sequence, read N- to C-terminus: MKVIDQFKNKKVLVLGLAKSGESAARLLDKLGAIVTVNDGKPFEDNPAAQSLLEEGIKVITGGHPLELLDEEFALMVKNPGIPYNNPMIEKALAKGIPVLTEVELAYLISEAPIIGITGSNGKTTTTTMIGEVLTAAGQHGLLSGNIGYPASQVAQIASDKDTLVMELSSFQLMGVQEFHPEIAVITNLMPTHIDYHGSFSEYVAAKWNIQNKMTAADFLVLNFNQDLAKDLTSKTEATVVPFSTLEKVDGAYLEDGQLYFRGEVVMAANEIGVPGSHNVENALATIAVAKLRGVDNQTIKETLSAFGGVKHRLQFVDDIKGVKFYNDSKSTNILATQKALSGFDNSKVVLIAGGLDRGNEFDELVPDITGLKKMVILGQSAERVKRAADKAGVAYVEATDIADATRKAYELATQGDVVLLSPANASWDMYANFEVRGDLFIDTVAELKE.

119 to 125 (GSNGKTT) provides a ligand contact to ATP.

The protein belongs to the MurCDEF family.

The protein localises to the cytoplasm. It carries out the reaction UDP-N-acetyl-alpha-D-muramoyl-L-alanine + D-glutamate + ATP = UDP-N-acetyl-alpha-D-muramoyl-L-alanyl-D-glutamate + ADP + phosphate + H(+). It participates in cell wall biogenesis; peptidoglycan biosynthesis. Functionally, cell wall formation. Catalyzes the addition of glutamate to the nucleotide precursor UDP-N-acetylmuramoyl-L-alanine (UMA). The polypeptide is UDP-N-acetylmuramoylalanine--D-glutamate ligase (Streptococcus pneumoniae (strain P1031)).